We begin with the raw amino-acid sequence, 134 residues long: Lymphocyte antigen 6F (134 aa).

A signal peptide spans 1–26 (MDSCHTTKSCVLILLVVLLCAERAQG). The UPAR/Ly6 domain maps to 27 to 119 (LECYNCLGVS…TGGSTWTMTR (93 aa)). 5 cysteine pairs are disulfide-bonded: Cys29–Cys53, Cys32–Cys41, Cys46–Cys74, Cys78–Cys98, and Cys99–Cys104. Residue Gly112 is the site of GPI-anchor amidated glycine attachment. Residues 113–134 (STWTMTRVLLLNLGSVFLQTLL) constitute a propeptide, removed in mature form.

The protein resides in the cell membrane. The polypeptide is Lymphocyte antigen 6F (Ly6f) (Mus musculus (Mouse)).